The chain runs to 89 residues: DNA/RNA-binding protein Alba 2 (89 aa).

The protein belongs to the histone-like Alba family. In terms of assembly, forms homodimers and homotetramers. Interacts with Alba 1.

Its subcellular location is the cytoplasm. The protein resides in the chromosome. Functionally, binds double-stranded DNA tightly but without sequence specificity. Involved in DNA compaction. The protein is DNA/RNA-binding protein Alba 2 of Archaeoglobus fulgidus (strain ATCC 49558 / DSM 4304 / JCM 9628 / NBRC 100126 / VC-16).